Consider the following 169-residue polypeptide: MSEVEYRCFVGGLAWATGDAELERTFSQFGEVIDSKIINDRETGRSRGFGFVTFKDEKSMKDAIDEMNGKELDGRTITVNEAQSRGGGGGGGRGGGGYGGRGGGGYGGGGGGYGDRRGGGGYGSGGGGRGGGGYGSGGGGYGGGGGRRDGGGYGGGDGGYGGGSGGGGW.

Residues 6 to 84 (YRCFVGGLAW…RTITVNEAQS (79 aa)) form the RRM domain. Disordered regions lie at residues 80-101 (NEAQSRGGGGGGGRGGGGYGGR) and 121-169 (GYGS…GGGW). Residues 85-101 (RGGGGGGGRGGGGYGGR) are compositionally biased toward gly residues.

In terms of tissue distribution, expressed only in roots and stems.

Its function is as follows. Possibly has a role in RNA transcription or processing during stress. This Brassica napus (Rape) protein is Glycine-rich RNA-binding protein 10 (GRP10).